Here is a 237-residue protein sequence, read N- to C-terminus: Ribosomal RNA small subunit methyltransferase G (237 aa).

S-adenosyl-L-methionine-binding positions include G78, F83, A129–E130, and R148. The tract at residues K218 to L237 is disordered.

This sequence belongs to the methyltransferase superfamily. RNA methyltransferase RsmG family.

Its subcellular location is the cytoplasm. In terms of biological role, specifically methylates the N7 position of a guanine in 16S rRNA. The sequence is that of Ribosomal RNA small subunit methyltransferase G from Streptococcus pneumoniae serotype 19F (strain G54).